A 356-amino-acid chain; its full sequence is Terpene synthase 10 (356 aa).

A DDxx(x)D/E motif motif is present at residues 90 to 95 (DDYLDS). The NDxxSxxxD/E motif signature appears at 232–240 (NDAVSYAKE).

It belongs to the terpene synthase family.

The enzyme catalyses geranylgeranyl diphosphate = beta-araneosene + diphosphate. Terpene synthase that converts its substrate farnesyl diphosphate (FPP) into several unidentified sesquiterpenes. TPS10 also converts geranylgeranyl diphosphate (GGPP) into the diterpene beta-araneosene. The chain is Terpene synthase 10 from Dictyostelium purpureum (Slime mold).